The sequence spans 401 residues: Exodeoxyribonuclease 7 large subunit (401 aa).

The protein belongs to the XseA family. As to quaternary structure, heterooligomer composed of large and small subunits.

The protein localises to the cytoplasm. It carries out the reaction Exonucleolytic cleavage in either 5'- to 3'- or 3'- to 5'-direction to yield nucleoside 5'-phosphates.. Its function is as follows. Bidirectionally degrades single-stranded DNA into large acid-insoluble oligonucleotides, which are then degraded further into small acid-soluble oligonucleotides. The chain is Exodeoxyribonuclease 7 large subunit from Clostridium botulinum (strain Loch Maree / Type A3).